Reading from the N-terminus, the 388-residue chain is Ferrochelatase (388 aa).

H196 and E277 together coordinate Fe cation.

It belongs to the ferrochelatase family.

It is found in the cytoplasm. The enzyme catalyses heme b + 2 H(+) = protoporphyrin IX + Fe(2+). The protein operates within porphyrin-containing compound metabolism; protoheme biosynthesis; protoheme from protoporphyrin-IX: step 1/1. In terms of biological role, catalyzes the ferrous insertion into protoporphyrin IX. The protein is Ferrochelatase of Trichormus variabilis (strain ATCC 29413 / PCC 7937) (Anabaena variabilis).